Reading from the N-terminus, the 413-residue chain is Short-chain specific acyl-CoA dehydrogenase, mitochondrial (413 aa).

The transit peptide at 1–24 directs the protein to the mitochondrion; the sequence is MAAALLARACGPVRGALWPRDCRR. A Phosphothreonine modification is found at T27. K51 bears the N6-acetyllysine; alternate mark. K51 carries the N6-succinyllysine; alternate modification. N6-acetyllysine is present on K72. K129 carries the post-translational modification N6-acetyllysine; alternate. Position 129 is an N6-succinyllysine; alternate (K129). Residues 152 to 161 and 185 to 187 contribute to the FAD site; these read FALSEPGNGS and WIT. S161 provides a ligand contact to substrate. K208 carries the N6-acetyllysine modification. K262 is subject to N6-acetyllysine; alternate. N6-succinyllysine; alternate is present on K262. A substrate-binding site is contributed by 269-272; the sequence is DMGR. Residue R297 participates in FAD binding. At K306 the chain carries N6-acetyllysine; alternate. The residue at position 306 (K306) is an N6-succinyllysine; alternate. Residues Q308 and 366-370 contribute to the FAD site; that span reads QILGG. Residue E393 is the Proton acceptor of the active site. Residue G394 participates in substrate binding. Residue 395–397 coordinates FAD; it reads TSE.

It belongs to the acyl-CoA dehydrogenase family. As to quaternary structure, homotetramer. It depends on FAD as a cofactor.

The protein localises to the mitochondrion matrix. The enzyme catalyses a short-chain 2,3-saturated fatty acyl-CoA + oxidized [electron-transfer flavoprotein] + H(+) = a short-chain (2E)-enoyl-CoA + reduced [electron-transfer flavoprotein]. The catalysed reaction is butanoyl-CoA + oxidized [electron-transfer flavoprotein] + H(+) = (2E)-butenoyl-CoA + reduced [electron-transfer flavoprotein]. It carries out the reaction pentanoyl-CoA + oxidized [electron-transfer flavoprotein] + H(+) = (2E)-pentenoyl-CoA + reduced [electron-transfer flavoprotein]. It catalyses the reaction hexanoyl-CoA + oxidized [electron-transfer flavoprotein] + H(+) = (2E)-hexenoyl-CoA + reduced [electron-transfer flavoprotein]. It participates in lipid metabolism; mitochondrial fatty acid beta-oxidation. Its function is as follows. Short-chain specific acyl-CoA dehydrogenase is one of the acyl-CoA dehydrogenases that catalyze the first step of mitochondrial fatty acid beta-oxidation, an aerobic process breaking down fatty acids into acetyl-CoA and allowing the production of energy from fats. The first step of fatty acid beta-oxidation consists in the removal of one hydrogen from C-2 and C-3 of the straight-chain fatty acyl-CoA thioester, resulting in the formation of trans-2-enoyl-CoA. Among the different mitochondrial acyl-CoA dehydrogenases, short-chain specific acyl-CoA dehydrogenase acts specifically on acyl-CoAs with saturated 4 to 6 carbons long primary chains. The polypeptide is Short-chain specific acyl-CoA dehydrogenase, mitochondrial (ACADS) (Sus scrofa (Pig)).